Consider the following 268-residue polypeptide: MSELDTARTGAVRKAADLLYEATRSGVAVVPVRNLIGETDLEAAYAVQEVNTQRALVAGRRLVGRKIGLTSVAVQKQLGVEQPDYGMLFADMARTEGEEIALDDVLQPKVEAEIAFVLGRDLDGDQLTVADLFRAIEFAVPAIEIVGSRITNWDIRITDTIADNASSGLYVLGSTPKRLCDFDSRQAGMVMERQGIPVSSGVGAACLGAPLNAVLWLARVMARAGRPLRTGDTVLSGALGPMVPVAGGDVFDVRIAGLGSVTAAFAKA.

Belongs to the hydratase/decarboxylase family.

It functions in the pathway xenobiotic degradation; toluene degradation. In terms of biological role, converts the product of 2-hydroxy-6-oxo-2,4-heptadienoate hydrolase. The sequence is that of TodF product hydratase (todJ) from Pseudomonas putida (strain ATCC 700007 / DSM 6899 / JCM 31910 / BCRC 17059 / LMG 24140 / F1).